A 59-amino-acid chain; its full sequence is Large ribosomal subunit protein bL32 (59 aa).

Residues 1 to 22 (MAVQQNKKSPSKRGMHRSHDFL) form a disordered region.

Belongs to the bacterial ribosomal protein bL32 family.

The protein is Large ribosomal subunit protein bL32 of Thiobacillus denitrificans (strain ATCC 25259 / T1).